Consider the following 414-residue polypeptide: Putative competence-damage inducible protein (414 aa).

This sequence belongs to the CinA family.

This Clostridium novyi (strain NT) protein is Putative competence-damage inducible protein.